We begin with the raw amino-acid sequence, 256 residues long: Gluconate 5-dehydrogenase (256 aa).

15-39 (LVTGASRGIGLTLAKGLARYGAEVV) is a binding site for NADP(+). Ser-147 lines the substrate pocket. The active-site Proton acceptor is the Tyr-160.

It belongs to the short-chain dehydrogenases/reductases (SDR) family. In terms of assembly, homodimer.

It localises to the cytoplasm. It carries out the reaction D-gluconate + NADP(+) = 5-dehydro-D-gluconate + NADPH + H(+). Its function is as follows. Catalyzes the reversible NADP-dependent oxidation of gluconate to 5-ketogluconate. Is involved in the non-phosphorylative, ketogenic oxidation of glucose. Is almost inactive with NAD as cosubstrate. Displays high substrate specificity since D-Glucose, D-sorbitol, and D-mannitol are not oxidized by the enzyme, and 2-ketogluconate and L-sorbose are not reduced. Can accept D-fructose as a substrate, with a rate that is only 10% of the rate of 5-ketogluconate reduction. This is Gluconate 5-dehydrogenase from Gluconobacter oxydans (strain 621H) (Gluconobacter suboxydans).